The sequence spans 121 residues: Large ribosomal subunit protein bL12 (121 aa).

It belongs to the bacterial ribosomal protein bL12 family. In terms of assembly, homodimer. Part of the ribosomal stalk of the 50S ribosomal subunit. Forms a multimeric L10(L12)X complex, where L10 forms an elongated spine to which 2 to 4 L12 dimers bind in a sequential fashion. Binds GTP-bound translation factors.

In terms of biological role, forms part of the ribosomal stalk which helps the ribosome interact with GTP-bound translation factors. Is thus essential for accurate translation. The polypeptide is Large ribosomal subunit protein bL12 (Anoxybacillus flavithermus (strain DSM 21510 / WK1)).